Consider the following 186-residue polypeptide: Imidazoleglycerol-phosphate dehydratase (186 aa).

This sequence belongs to the imidazoleglycerol-phosphate dehydratase family.

It is found in the cytoplasm. It catalyses the reaction D-erythro-1-(imidazol-4-yl)glycerol 3-phosphate = 3-(imidazol-4-yl)-2-oxopropyl phosphate + H2O. The protein operates within amino-acid biosynthesis; L-histidine biosynthesis; L-histidine from 5-phospho-alpha-D-ribose 1-diphosphate: step 6/9. In Dictyoglomus thermophilum (strain ATCC 35947 / DSM 3960 / H-6-12), this protein is Imidazoleglycerol-phosphate dehydratase.